Consider the following 37-residue polypeptide: Tick defensin 2 (37 aa).

Disulfide bonds link Cys4–Cys26, Cys11–Cys34, and Cys15–Cys36.

This sequence belongs to the invertebrate defensin family.

It is found in the secreted. Its function is as follows. Antibacterial peptide mostly active against Gram-positive bacteria (MIC=0.24 ug/ml on Bacillus subtilis, and MIC=0.94 ug/ml on Micrococcus luteus, MIC&gt;120 ug/ml on both Escherichia coli and Pseudomonas aeruginosa). The sequence is that of Tick defensin 2 from Ornithodoros savignyi (African eyed tampan).